Consider the following 1050-residue polypeptide: Toll-like receptor 7 (1050 aa).

A signal peptide spans 1-26 (MVFSMWTRKRQILIFLNMLLVSRVFG). Topologically, residues 27–837 (FRWFPKTLPC…SLDLYTCELD (811 aa)) are extracellular. 20 LRR repeats span residues 42–64 (IPEA…EGIP), 65–87 (TNTT…SFRR), 89–111 (NHLE…KANV), 126–149 (LSDL…LPSS), 151–170 (HLLS…NLTE), 171–195 (LVNI…SYSI), 203–226 (MRNL…LPPN), 228–247 (LELY…DFNN), 248–273 (LNEL…CTPC), 275–289 (NNSP…FNSL), 290–312 (TELK…WFKN), 314–337 (RNLQ…KFLH), 339–364 (LPNL…TLPH), 369–392 (LENL…SLSV), 396–419 (LPRL…IFKH), 421–443 (ENLK…REVG), 493–516 (HIYG…DFQH), 517–542 (LSFL…LWPL), 543–565 (RELR…AFEE), and 567–589 (QSLE…ITHM). N-linked (GlcNAc...) asparagine glycosylation is found at N66 and N69. N-linked (GlcNAc...) asparagine glycans are attached at residues N167, N190, and N215. A glycan (N-linked (GlcNAc...) asparagine) is linked at N387. Residues N524 and N535 are each glycosylated (N-linked (GlcNAc...) asparagine). A glycan (N-linked (GlcNAc...) asparagine) is linked at N591. 8 LRR repeats span residues 596-619 (LRLL…TMES), 620-645 (DSLR…RYLD), 650-673 (LFNL…VFEG), 675-698 (PPNL…RLQL), 699-722 (LKHL…LANC), 724-746 (KSLT…FLED), 747-770 (ALQL…SFPE), and 773-796 (LNNL…VWFV). Residues N680 and N721 are each glycosylated (N-linked (GlcNAc...) asparagine). Residue N800 is glycosylated (N-linked (GlcNAc...) asparagine). The chain crosses the membrane as a helical span at residues 838-858 (LTNLILFSVSISSVLFLMVVM). Over 859-1050 (TTSHLFFWDM…AYSQMFKETV (192 aa)) the chain is Cytoplasmic. The 145-residue stretch at 890–1034 (SCYDAFIVYD…YFWQCLKNAL (145 aa)) folds into the TIR domain.

This sequence belongs to the Toll-like receptor family. In terms of assembly, homodimer. Interacts with MYD88 via their respective TIR domains. Interacts with UNC93B1. Interacts with SMPDL3B. Post-translationally, the first cleavage is performed by asparagine endopeptidase or cathepsin family members. This initial cleavage event is followed by a trimming event that is solely cathepsin mediated and required for optimal receptor signaling.

It is found in the endosome membrane. The protein localises to the endoplasmic reticulum membrane. Its subcellular location is the lysosome. It localises to the cytoplasmic vesicle. The protein resides in the phagosome. With respect to regulation, activated by guanosine analogs including deoxyguanosine, 7-thia-8-oxoguanosine or 7-deazaguanosine in a RNA-independent manner. In terms of biological role, endosomal receptor that plays a key role in innate and adaptive immunity. Controls host immune response against pathogens through recognition of uridine-containing single strand RNAs (ssRNAs) of viral origin or guanosine analogs. Upon binding to agonists, undergoes dimerization that brings TIR domains from the two molecules into direct contact, leading to the recruitment of TIR-containing downstream adapter MYD88 through homotypic interaction. In turn, the Myddosome signaling complex is formed involving IRAK4, IRAK1, TRAF6, TRAF3 leading to activation of downstream transcription factors NF-kappa-B and IRF7 to induce pro-inflammatory cytokines and interferons, respectively. In plasmacytoid dendritic cells, RNASET2 endonuclease cooperates with PLD3 or PLD4 5'-&gt;3' exonucleases to process RNA and release 2',3'-cyclic guanosine monophosphate (2',3'-cGMP) and cytidine-rich RNA fragments that occupy TLR7 ligand-binding pockets and trigger a signaling-competent state. In Mus musculus (Mouse), this protein is Toll-like receptor 7 (Tlr7).